The following is a 317-amino-acid chain: MLMVPNIAILSGGFSCEREISLMSGKAVKKALDSLSYNAIEIDVDSNIAQKLKKTNPALAFIALHGPYGEDGCIQGLLEILGIKYTHSEVMASAVAMNKVMSKHIFHSLNIDTPRGYVISREDVLKNNIKVDYPYVLKPINEGSSIGVHMIFSHEDYLELKNNSSTIMEKMIIEEYIPGIELHTAVLLNEAIGTMEIRPKNKFYDYEAKYTDGFAEHIFPAEIPNNIYRITLEHALKVHQFLGCKTVSRSDFRYNPQNNTLKMLEVNTHPGFTELSLVPEIAKLTRGIDFNELVKIIVEDSLHHRNIRDQADVEQCY.

The ATP-grasp domain maps to 103 to 299 (KHIFHSLNID…FNELVKIIVE (197 aa)). 130 to 183 (KVDYPYVLKPINEGSSIGVHMIFSHEDYLELKNNSSTIMEKMIIEEYIPGIELH) is a binding site for ATP. Positions 251, 265, and 267 each coordinate Mg(2+).

It belongs to the D-alanine--D-alanine ligase family. Mg(2+) is required as a cofactor. Mn(2+) serves as cofactor.

The protein localises to the cytoplasm. It catalyses the reaction 2 D-alanine + ATP = D-alanyl-D-alanine + ADP + phosphate + H(+). It participates in cell wall biogenesis; peptidoglycan biosynthesis. In terms of biological role, cell wall formation. The polypeptide is D-alanine--D-alanine ligase (Wolbachia pipientis subsp. Culex pipiens (strain wPip)).